The chain runs to 207 residues: FMN-dependent NADH:quinone oxidoreductase 2 (207 aa).

Residues S10, 16-18 (SIS), 96-99 (MYNL), and 141-144 (SRGG) contribute to the FMN site.

Belongs to the azoreductase type 1 family. As to quaternary structure, homodimer. It depends on FMN as a cofactor.

It catalyses the reaction 2 a quinone + NADH + H(+) = 2 a 1,4-benzosemiquinone + NAD(+). It carries out the reaction N,N-dimethyl-1,4-phenylenediamine + anthranilate + 2 NAD(+) = 2-(4-dimethylaminophenyl)diazenylbenzoate + 2 NADH + 2 H(+). Its function is as follows. Quinone reductase that provides resistance to thiol-specific stress caused by electrophilic quinones. Also exhibits azoreductase activity. Catalyzes the reductive cleavage of the azo bond in aromatic azo compounds to the corresponding amines. The polypeptide is FMN-dependent NADH:quinone oxidoreductase 2 (Trichormus variabilis (strain ATCC 29413 / PCC 7937) (Anabaena variabilis)).